A 274-amino-acid polypeptide reads, in one-letter code: 2,3,4,5-tetrahydropyridine-2,6-dicarboxylate N-succinyltransferase (274 aa).

Substrate contacts are provided by arginine 104 and aspartate 141.

This sequence belongs to the transferase hexapeptide repeat family. In terms of assembly, homotrimer.

The protein resides in the cytoplasm. The enzyme catalyses (S)-2,3,4,5-tetrahydrodipicolinate + succinyl-CoA + H2O = (S)-2-succinylamino-6-oxoheptanedioate + CoA. It functions in the pathway amino-acid biosynthesis; L-lysine biosynthesis via DAP pathway; LL-2,6-diaminopimelate from (S)-tetrahydrodipicolinate (succinylase route): step 1/3. The polypeptide is 2,3,4,5-tetrahydropyridine-2,6-dicarboxylate N-succinyltransferase (Enterobacter sp. (strain 638)).